The primary structure comprises 516 residues: Arabinose import ATP-binding protein AraG (516 aa).

ABC transporter domains are found at residues 5–240 (LRFD…MVGR) and 240–497 (REIS…LPQS). 37 to 44 (GENGAGKS) serves as a coordination point for ATP.

This sequence belongs to the ABC transporter superfamily. Arabinose importer (TC 3.A.1.2.2) family. The complex is composed of two ATP-binding proteins (AraG), two transmembrane proteins (AraH) and a solute-binding protein (AraF).

It is found in the cell inner membrane. It catalyses the reaction L-arabinose(out) + ATP + H2O = L-arabinose(in) + ADP + phosphate + H(+). Part of the ABC transporter complex AraFGH involved in arabinose import. Responsible for energy coupling to the transport system. The chain is Arabinose import ATP-binding protein AraG from Paraburkholderia xenovorans (strain LB400).